The following is a 251-amino-acid chain: MSKFQLEQMLRAGVHFGHLARRWSPKMKPYIFMEKNGVHIIDLKKTLVMADEALKAIEAIASTGREIMLVGTKKQAKVIIAEQAERAGMPYVCERWLGGMLTNFSTIRQSIRRMNAIDRMETDGTFDMITKKERLMLLREKDKLVRILGGIANMNRLPAALFVVDIKKEHIAIKEARSLGIPIFAMVDTNCDPDEVDYIIPANDDAIRSIELMVKAVADTIIEARSLQEEQEAIAEMDEQVEEDAEEASND.

The segment at 232–251 is disordered; sequence EAIAEMDEQVEEDAEEASND.

The protein belongs to the universal ribosomal protein uS2 family.

In Chlorobaculum parvum (strain DSM 263 / NCIMB 8327) (Chlorobium vibrioforme subsp. thiosulfatophilum), this protein is Small ribosomal subunit protein uS2.